Consider the following 70-residue polypeptide: MILIKKFIVAIELFIFNRNNCRYILLCTDNKVKNIQTSLSICILCAISYALIKKIQQTFQLSSKFAASCS.

It is found in the plastid. The protein resides in the chloroplast. This is an uncharacterized protein from Mesostigma viride (Green alga).